A 191-amino-acid polypeptide reads, in one-letter code: NF-kappa-B inhibitor-interacting Ras-like protein 2 (191 aa).

A small GTPase-like region spans residues 1-191 (MGKSCKVVVC…KNKGSGSLDG (191 aa)). Position 11–18 (11–18 (GQASVGKT)) interacts with GTP. The Effector region motif lies at 35 to 43 (MIETQEDIY). GTP contacts are provided by residues 61–65 (DTRGL) and 120–123 (NKCD). Residues 169–191 (TQPQSKSAFPLSRKNKGSGSLDG) form a disordered region.

It belongs to the small GTPase superfamily. Ras family. KappaB-Ras subfamily. In terms of assembly, interacts with both NF-kappa-B inhibitor alpha (NFKBIA) and beta (NFKBIB) in vitro. However, it probably only interacts with NFKBIB in vivo. Interacts with GFOD1. In terms of tissue distribution, widely expressed.

It localises to the cytoplasm. In terms of biological role, atypical Ras-like protein that acts as a potent regulator of NF-kappa-B activity by preventing the degradation of NF-kappa-B inhibitor beta (NFKBIB) by most signals, explaining why NFKBIB is more resistant to degradation. May act by blocking phosphorylation of NFKBIB and nuclear localization of p65/RELA NF-kappa-B subunit. It is unclear whether it acts as a GTPase. Both GTP- and GDP-bound forms block phosphorylation of NFKBIB. The chain is NF-kappa-B inhibitor-interacting Ras-like protein 2 (NKIRAS2) from Homo sapiens (Human).